The primary structure comprises 1774 residues: Protein TIC 214 (1774 aa).

Helical transmembrane passes span 19 to 39 (IINS…FSIG), 68 to 88 (FIAG…HLAL), 91 to 111 (PHTI…WNNH), 133 to 153 (VFLN…SSML), 176 to 196 (VGWL…LVWI), and 227 to 247 (IFSI…PSPI). Residues 254-268 (GTSETEERGGTKQDQ) are compositionally biased toward basic and acidic residues. The disordered stretch occupies residues 254–275 (GTSETEERGGTKQDQEVSTEEA).

Belongs to the TIC214 family. In terms of assembly, part of the Tic complex.

The protein localises to the plastid. It localises to the chloroplast inner membrane. In terms of biological role, involved in protein precursor import into chloroplasts. May be part of an intermediate translocation complex acting as a protein-conducting channel at the inner envelope. This Aethionema cordifolium (Lebanon stonecress) protein is Protein TIC 214.